Consider the following 347-residue polypeptide: MESPAASPPASLPQTKGKSKRKKDLRISCVSKPPVSNPTPPRNLDSRTFITIGDRNFEVEADDLVTISELGRGAYGVVEKVRHAQSGTIMAVKRIRATVNTQEQKRLLMDLDINMRTVDCFYTVTFYGALFREGDVWICMELMDTSLDKFYRKVLEKNMKIPEDILGEIAVSIVRALEHLHSKLSVIHRDVKPSNVLINKEGHVKMCDFGISGYLVDSVAKTMDAGCKPYMAPERINPELNQKGYNVKSDVWSLGITMIEMAILRFPYESWGTPFQQLKQVVEEPSPQLPADQFSPEFVDFTSQCLRKNPAERMSYLELMEHPFFTLHKTKKTDIAAFVKEILGEDS.

Position 1 is an N-acetylmethionine (methionine 1). The span at 1 to 11 (MESPAASPPAS) shows a compositional bias: pro residues. The tract at residues 1-45 (MESPAASPPASLPQTKGKSKRKKDLRISCVSKPPVSNPTPPRNLD) is disordered. Serine 3 is subject to Phosphoserine. In terms of domain architecture, Protein kinase spans 64–325 (LVTISELGRG…YLELMEHPFF (262 aa)). ATP is bound by residues 70–78 (LGRGAYGVV) and lysine 93. Residue aspartate 190 is the Proton acceptor of the active site. Position 218 is a phosphoserine (serine 218). Residue threonine 222 is modified to Phosphothreonine.

Belongs to the protein kinase superfamily. STE Ser/Thr protein kinase family. MAP kinase kinase subfamily. As to quaternary structure, component of a signaling complex containing at least AKAP13, PKN1, MAPK14, ZAK and MAP2K3. Within this complex, AKAP13 interacts directly with PKN1, which in turn recruits MAPK14, MAP2K3 and ZAK. Binds to DYRK1B/MIRK and increases its kinase activity. Part of a complex with MAP3K3, RAC1 and CCM2. Interacts with ARRB1. Autophosphorylated. Phosphorylation on Ser-218 and Thr-222 by MAP kinase kinase kinases positively regulates the kinase activity. Phosphorylated by TAOK2.

It catalyses the reaction L-seryl-[protein] + ATP = O-phospho-L-seryl-[protein] + ADP + H(+). The catalysed reaction is L-threonyl-[protein] + ATP = O-phospho-L-threonyl-[protein] + ADP + H(+). It carries out the reaction L-tyrosyl-[protein] + ATP = O-phospho-L-tyrosyl-[protein] + ADP + H(+). With respect to regulation, activated by dual phosphorylation on Ser-218 and Thr-222. Dual specificity kinase. Is activated by cytokines and environmental stress in vivo. Catalyzes the concomitant phosphorylation of a threonine and a tyrosine residue in the MAP kinase p38. Part of a signaling cascade that begins with the activation of the adrenergic receptor ADRA1B and leads to the activation of MAPK14. In Mus musculus (Mouse), this protein is Dual specificity mitogen-activated protein kinase kinase 3 (Map2k3).